The chain runs to 156 residues: DNA mismatch endonuclease Vsr (156 aa).

Residues Asp51 and Thr63 each contribute to the Mg(2+) site.

This sequence belongs to the Vsr family. Mg(2+) is required as a cofactor. The cofactor is Zn(2+).

Its function is as follows. Deamination of 5-methylcytosine in DNA results in T/G mismatches. If unrepaired, these mismatches can lead to C-to-T transition mutations. The very short patch (VSP) repair process in E.coli counteracts the mutagenic process by repairing the mismatches in favor of the G-containing strand. This enzyme is an endonuclease that nicks double-stranded DNA within the sequence CT(AT)GN or NT(AT)GG next to the thymidine residue that is mismatched to 2'-deoxyguanosine. The incision is mismatch-dependent and strand-specific. This chain is DNA mismatch endonuclease Vsr, found in Escherichia coli (strain K12).